A 595-amino-acid chain; its full sequence is Anthranilate synthase alpha subunit 1, chloroplastic (595 aa).

The N-terminal 54 residues, 1 to 54 (MSSSMNVATMQALTFSRRLLPSVASRYLSSSSVTVTGYSGRSSAYAPSFRSIKC), are a transit peptide targeting the chloroplast. Valine 55 is modified (N-acetylvaline). Residues serine 115 and 356–358 (PYM) each bind L-tryptophan. 391–392 (GT) is a binding site for chorismate. Glutamate 418 is a binding site for Mg(2+). Residues tyrosine 506, arginine 526, 558-560 (GAG), and glycine 560 each bind chorismate. Glutamate 573 is a Mg(2+) binding site.

It belongs to the anthranilate synthase component I family. As to quaternary structure, heterotetramer consisting of two non-identical subunits: a beta subunit and a large alpha subunit. Mg(2+) is required as a cofactor. As to expression, expressed in the central cylinder of mature primary root zones, including pericycle and early lateral root primordia, and vasculature of cotyledons.

Its subcellular location is the plastid. It localises to the chloroplast. The enzyme catalyses chorismate + L-glutamine = anthranilate + pyruvate + L-glutamate + H(+). The protein operates within amino-acid biosynthesis; L-tryptophan biosynthesis; L-tryptophan from chorismate: step 1/5. Feedback inhibition by tryptophan. In terms of biological role, part of a heterotetrameric complex that catalyzes the two-step biosynthesis of anthranilate, an intermediate in the biosynthesis of L-tryptophan. In the first step, the glutamine-binding beta subunit of anthranilate synthase (AS) provides the glutamine amidotransferase activity which generates ammonia as a substrate that, along with chorismate, is used in the second step, catalyzed by the large alpha subunit of AS to produce anthranilate. Plays an important regulatory role in auxin production via the tryptophan-dependent biosynthetic pathway. This Arabidopsis thaliana (Mouse-ear cress) protein is Anthranilate synthase alpha subunit 1, chloroplastic (ASA1).